We begin with the raw amino-acid sequence, 185 residues long: uncharacterized protein (185 aa).

The next 5 helical transmembrane spans lie at 4-24 (TYLTGYFPLIAILLFSSSLSI), 54-74 (LALFAAFALLYFMVLSALKLI), 98-118 (LRMGSMIYLGGGILSFVLLQN), 119-139 (VIWIVIWFAVVTLAYFVFTVY), and 153-173 (FILLELLFWFTFVIGILFIFI).

It is found in the cell membrane. This is an uncharacterized protein from Bacillus subtilis (strain 168).